A 139-amino-acid polypeptide reads, in one-letter code: MTATEIQKVLPHRYPMLMVDRVLELVSGERILAQKNVTINEEFFQGHFPGNPVMPGVLIVEALAQAGAIALLKMDRFAGKTPYFGGVDKVKFRRMVRPGDTLTLNVTLDKLKDNIGSAHALATVDGEKACSADLLFLIK.

His-47 is a catalytic residue.

The protein belongs to the thioester dehydratase family. FabZ subfamily.

Its subcellular location is the cytoplasm. It carries out the reaction a (3R)-hydroxyacyl-[ACP] = a (2E)-enoyl-[ACP] + H2O. Involved in unsaturated fatty acids biosynthesis. Catalyzes the dehydration of short chain beta-hydroxyacyl-ACPs and long chain saturated and unsaturated beta-hydroxyacyl-ACPs. In Oenococcus oeni (strain ATCC BAA-331 / PSU-1), this protein is 3-hydroxyacyl-[acyl-carrier-protein] dehydratase FabZ.